We begin with the raw amino-acid sequence, 521 residues long: BAR/IMD domain-containing adapter protein 2 (521 aa).

Residues M1–S250 enclose the IMD domain. A coiled-coil region spans residues D132–N153. Residues S262, S324, S326, and S337 each carry the phosphoserine modification. Residues A297–A370 form a disordered region. The segment covering Q321–K333 has biased composition (low complexity). Position 341 is a phosphothreonine (T341). S347 carries the phosphoserine modification. Polar residues predominate over residues S353–M368. Residue T361 is modified to Phosphothreonine. Phosphoserine is present on residues S367, S385, S396, and S455. The SH3 domain maps to N375–N438. A disordered region spans residues Q450–D471.

Homodimer. Interacts with CDC42 and RAC1 that have been activated by GTP binding. Interacts with ATN1, ADGRB1, DIAPH1, EPS8, SHANK1, SHANK2, SHANK3, TIAM1, WASF1 and WASF2. Interacts with ENAH after recruitment of CDC42. In terms of processing, phosphorylated on tyrosine residues by INSR in response to insulin treatment.

The protein localises to the cytoplasm. It localises to the membrane. Its subcellular location is the cell projection. It is found in the filopodium. The protein resides in the ruffle. The protein localises to the cytoskeleton. Functionally, adapter protein that links membrane-bound small G-proteins to cytoplasmic effector proteins. Necessary for CDC42-mediated reorganization of the actin cytoskeleton and for RAC1-mediated membrane ruffling. Involved in the regulation of the actin cytoskeleton by WASF family members and the Arp2/3 complex. Plays a role in neurite growth. Acts syngeristically with ENAH to promote filipodia formation. Plays a role in the reorganization of the actin cytoskeleton in response to bacterial infection. Participates in actin bundling when associated with EPS8, promoting filopodial protrusions. The chain is BAR/IMD domain-containing adapter protein 2 (BAIAP2) from Bos taurus (Bovine).